Reading from the N-terminus, the 500-residue chain is Pyridine nucleotide-disulfide oxidoreductase domain-containing protein 1 (500 aa).

The residue at position 1 (methionine 1) is an N-acetylmethionine. Residues 211 to 235 are disordered; that stretch reads TRYTTEGRKKEARSKSKADNVGSAL. Basic and acidic residues predominate over residues 213 to 228; the sequence is YTTEGRKKEARSKSKA.

The protein belongs to the class-I pyridine nucleotide-disulfide oxidoreductase family. PYROXD1 subfamily. FAD is required as a cofactor.

The protein resides in the nucleus. Its subcellular location is the cytoplasm. It is found in the myofibril. It localises to the sarcomere. Probable FAD-dependent oxidoreductase; involved in the cellular oxidative stress response. Required for normal sarcomere structure and muscle fiber integrity. This Homo sapiens (Human) protein is Pyridine nucleotide-disulfide oxidoreductase domain-containing protein 1 (PYROXD1).